A 343-amino-acid polypeptide reads, in one-letter code: F17e-G fimbrial adhesin (343 aa).

Residues 1 to 22 (MTNFYKVFLAVFILVCCNISHA) form the signal peptide. The tract at residues 23 to 199 (AVSFIGSTEN…LNPFTLNDTV (177 aa)) is receptor-binding lectin domain. Residues 65-66 (AN), 110-111 (DT), and 138-141 (STQG) each bind a carbohydrate. An intrachain disulfide couples C75 to C132. Residues 200 to 343 (TSCRLLTPSA…GISTFTFSYQ (144 aa)) form a fimbrillin-binding domain region. The disordered stretch occupies residues 287-307 (LKFGPDSPVKGNENQWQLSTG). Residues 298-307 (NENQWQLSTG) show a composition bias toward polar residues.

The protein belongs to the fimbrial protein family.

The protein localises to the fimbrium. Essential fimbrial adhesion factor that mediates binding to N-acetylglucosamine-containing receptors in the host intestinal microvilli, leading to colonization of the intestinal tissue, and diarrhea or septicemia. Also confers adhesiveness to laminin and basement membranes. This chain is F17e-G fimbrial adhesin (f17eG), found in Escherichia coli.